The chain runs to 303 residues: Probable cell division protein WhiA (303 aa).

The segment at residues 272-303 (SIQQIADSLAVPLTKSGVNHRLRKINKIAEDL) is a DNA-binding region (H-T-H motif).

It belongs to the WhiA family.

Its function is as follows. Involved in cell division and chromosome segregation. This Streptococcus mutans serotype c (strain ATCC 700610 / UA159) protein is Probable cell division protein WhiA.